A 272-amino-acid chain; its full sequence is MFVKSETLELKEEEDVLVLLGSASPALAALTPLSSSADEEEEEEPGASGGARRQRGAEAGQGARGGVAAGAEGCRPARLLGLVHDCKRRPSRARAVSRGAKTAETVQRIKKTRRLKANNRERNRMHNLNAALDALREVLPTFPEDAKLTKIETLRFAHNYIWALTETLRLADHCGGGGGGLPGALFSEAVLLSPGGASAALSSSGDSPSPASTWSCTNSPAPSSSVSSNSTSPYSCTLSPASPAGSDMDYWQPPPPDKHRYAPHLPIARDCI.

Positions 30 to 69 (LTPLSSSADEEEEEEPGASGGARRQRGAEAGQGARGGVAA) are disordered. The region spanning 112-164 (TRRLKANNRERNRMHNLNAALDALREVLPTFPEDAKLTKIETLRFAHNYIWAL) is the bHLH domain. The span at 197–239 (ASAALSSSGDSPSPASTWSCTNSPAPSSSVSSNSTSPYSCTLS) shows a compositional bias: low complexity. The tract at residues 197–264 (ASAALSSSGD…PPDKHRYAPH (68 aa)) is disordered.

In terms of assembly, efficient DNA binding requires dimerization with another bHLH protein.

It is found in the nucleus. Functionally, transcriptional regulator. Involved in neuronal differentiation. Activates transcription by binding to the E box (5'-CANNTG-3'). This chain is Neurogenin-2 (NEUROG2), found in Homo sapiens (Human).